The primary structure comprises 312 residues: Methionyl-tRNA formyltransferase (312 aa).

109–112 (SLLP) is a (6S)-5,6,7,8-tetrahydrofolate binding site.

The protein belongs to the Fmt family.

It carries out the reaction L-methionyl-tRNA(fMet) + (6R)-10-formyltetrahydrofolate = N-formyl-L-methionyl-tRNA(fMet) + (6S)-5,6,7,8-tetrahydrofolate + H(+). In terms of biological role, attaches a formyl group to the free amino group of methionyl-tRNA(fMet). The formyl group appears to play a dual role in the initiator identity of N-formylmethionyl-tRNA by promoting its recognition by IF2 and preventing the misappropriation of this tRNA by the elongation apparatus. In Listeria monocytogenes serotype 4b (strain CLIP80459), this protein is Methionyl-tRNA formyltransferase.